Consider the following 337-residue polypeptide: MAQHETDAVIVGAGPVGLFAVFQCGMVKVRCHVVDALEAVGGQLSALYPEKPIYDIPGHPSILAADLVERLSEQAAPFAPTYHFGTQVSTLSRLDDGRWLCGLSNGDSIAARAVIICAGGGAFGPNRPPLDGLEQFEGTGVFYLVRKREDFRGKKVVIAGGGDSAVDWAISLSEVAAKVMVVHRRPKFRAAPESEARLKQLAETGAVELVVPYQLHGLEGENGTLSAVVVATLEGETKSLPADVLLPFYGLSSDLGPIAQWNLGMDRNLIAVDPATGATDAPGIYAAGDICTYPGKLKLILSGFAEAARVAHSAHDVVHPGEALHFEHSTTSGVPKG.

FAD contacts are provided by Asp35, Gln43, Tyr48, Val88, Phe123, Asp289, and Thr330.

The protein belongs to the ferredoxin--NADP reductase type 2 family. As to quaternary structure, homodimer. It depends on FAD as a cofactor.

The enzyme catalyses 2 reduced [2Fe-2S]-[ferredoxin] + NADP(+) + H(+) = 2 oxidized [2Fe-2S]-[ferredoxin] + NADPH. This Paramagnetospirillum magneticum (strain ATCC 700264 / AMB-1) (Magnetospirillum magneticum) protein is Ferredoxin--NADP reductase.